We begin with the raw amino-acid sequence, 315 residues long: NAD-dependent protein lipoamidase sirtuin-4, mitochondrial (315 aa).

The N-terminal 29 residues, Met-1–Ser-29, are a transit peptide targeting the mitochondrion. A Deacetylase sirtuin-type domain is found at Pro-38–Arg-315. Residues Gly-63–Tyr-83 and Gln-144–Asp-147 each bind NAD(+). His-162 serves as the catalytic Proton acceptor. Positions 170, 173, 221, and 224 each coordinate Zn(2+). NAD(+)-binding positions include Gly-261 to Ser-263, Asn-287 to Gly-289, and Cys-305.

Belongs to the sirtuin family. Class II subfamily. Interacts with GLUD1, IDE and SLC25A5. Interacts with DLAT and PDHX. Interacts with MCCC1 (via the biotin carboxylation domain). Interacts with PCCA and PC. It depends on Zn(2+) as a cofactor.

Its subcellular location is the mitochondrion matrix. The catalysed reaction is N(6)-[(R)-lipoyl]-L-lysyl-[protein] + NAD(+) + H2O = 2''-O-lipoyl-ADP-D-ribose + nicotinamide + L-lysyl-[protein]. It carries out the reaction N(6)-biotinyl-L-lysyl-[protein] + NAD(+) + H2O = 2''-O-biotinyl-ADP-D-ribose + nicotinamide + L-lysyl-[protein]. The enzyme catalyses N(6)-acetyl-L-lysyl-[protein] + NAD(+) + H2O = 2''-O-acetyl-ADP-D-ribose + nicotinamide + L-lysyl-[protein]. It catalyses the reaction L-cysteinyl-[protein] + NAD(+) = S-(ADP-D-ribosyl)-L-cysteinyl-[protein] + nicotinamide + H(+). In terms of biological role, acts as a NAD-dependent protein lipoamidase, biotinylase, deacetylase and ADP-ribosyl transferase. Catalyzes more efficiently removal of lipoyl- and biotinyl- than acetyl-lysine modifications. Inhibits the pyruvate dehydrogenase complex (PDH) activity via the enzymatic hydrolysis of the lipoamide cofactor from the E2 component, DLAT, in a phosphorylation-independent manner. Catalyzes the transfer of ADP-ribosyl groups onto target proteins, including mitochondrial GLUD1, inhibiting GLUD1 enzyme activity. Acts as a negative regulator of mitochondrial glutamine metabolism by mediating mono ADP-ribosylation of GLUD1: expressed in response to DNA damage and negatively regulates anaplerosis by inhibiting GLUD1, leading to block metabolism of glutamine into tricarboxylic acid cycle and promoting cell cycle arrest. In response to mTORC1 signal, SIRT4 expression is repressed, promoting anaplerosis and cell proliferation. Acts as a tumor suppressor. Also acts as a NAD-dependent protein deacetylase: mediates deacetylation of 'Lys-471' of MLYCD, inhibiting its activity, thereby acting as a regulator of lipid homeostasis. Does not seem to deacetylate PC. Controls fatty acid oxidation by inhibiting PPARA transcriptional activation. Impairs SIRT1-PPARA interaction probably through the regulation of NAD(+) levels. Down-regulates insulin secretion. This is NAD-dependent protein lipoamidase sirtuin-4, mitochondrial from Bos taurus (Bovine).